The sequence spans 393 residues: MTRVVLAAAYRTPIGVFGGAFKDVPAYDLGATLIEHIIKETGLNPSEIDEVIIGNVLQAGQGQNPARIAAMKGGLPETVPAFTVNKVCGSGLKSIQLAYQSIVTGENDIVLAGGMENMSQSPMLVNNSRFGFKMGHQSMVDSMVYDGLTDVFNQYHMGITAENLVEQYGISREEQDTFAVNSQQKAVRAQQNGEFDSEIVPVSIPQRKGEPIVVTKDEGVRENVSVEKLSRLRPAFKKDGTVTAGNASGINDGAAMMLVMSEDKAKELNIEPLAVLDGFGSHGVDPSIMGIAPVGAVEKALKRSKKELSDIDVFELNEAFAAQSLAVDRELKLPPEKVNVKGGAIALGHPIGASGARVLVTLLHQLNDEVETGLTSLCIGGGQAIAAVVSKYK.

Cys-88 serves as the catalytic Acyl-thioester intermediate. Residues His-349 and Cys-378 each act as proton acceptor in the active site.

Belongs to the thiolase-like superfamily. Thiolase family.

The protein localises to the cytoplasm. The catalysed reaction is 2 acetyl-CoA = acetoacetyl-CoA + CoA. This Staphylococcus aureus (strain NCTC 8325 / PS 47) protein is Probable acetyl-CoA acyltransferase.